The sequence spans 375 residues: tRNA-specific 2-thiouridylase MnmA (375 aa).

ATP-binding positions include 20 to 27 and Leu46; that span reads AMSGGVDS. Cys114 (nucleophile) is an active-site residue. An intrachain disulfide couples Cys114 to Cys211. An ATP-binding site is contributed by Gly138. The tract at residues 160-162 is interaction with tRNA; that stretch reads RDQ. The Cysteine persulfide intermediate role is filled by Cys211.

The protein belongs to the MnmA/TRMU family.

The protein resides in the cytoplasm. The catalysed reaction is S-sulfanyl-L-cysteinyl-[protein] + uridine(34) in tRNA + AH2 + ATP = 2-thiouridine(34) in tRNA + L-cysteinyl-[protein] + A + AMP + diphosphate + H(+). Functionally, catalyzes the 2-thiolation of uridine at the wobble position (U34) of tRNA, leading to the formation of s(2)U34. The protein is tRNA-specific 2-thiouridylase MnmA of Ruegeria pomeroyi (strain ATCC 700808 / DSM 15171 / DSS-3) (Silicibacter pomeroyi).